Consider the following 304-residue polypeptide: Killer cell immunoglobulin-like receptor 2DS5 (304 aa).

The first 21 residues, 1–21 (MSLMVISMACVAFFLLQGAWP), serve as a signal peptide directing secretion. The Extracellular portion of the chain corresponds to 22–245 (HEGFRRKPSL…SETGNPRHLH (224 aa)). Ig-like C2-type domains follow at residues 42-107 (EETV…VTHS) and 142-205 (GESV…FRDS). Cystine bridges form between Cys49-Cys100 and Cys149-Cys198. Residues Asn67, Asn84, Asn178, and Asn223 are each glycosylated (N-linked (GlcNAc...) asparagine). Residues 246–264 (VLIGTSVVKLPFTILLFFL) form a helical membrane-spanning segment. The Cytoplasmic segment spans residues 265–304 (LHRWCSNKKNASVMDQGPAGNRTVNREDSDEQDHQEVSYA). Positions 275-304 (ASVMDQGPAGNRTVNREDSDEQDHQEVSYA) are disordered. The span at 288–304 (VNREDSDEQDHQEVSYA) shows a compositional bias: basic and acidic residues.

Belongs to the immunoglobulin superfamily. As to quaternary structure, interacts with TYROBP. Post-translationally, N-glycosylated, glycosylation varies depending on the allele which alters cell surface expression levels. As to expression, expressed on a discrete subset of peripheral blood NK cells.

It localises to the cell membrane. Its function is as follows. Activating natural killer (NK) receptor that recognizes C2 epitopes of HLA-C alleles. Bridging the innate and adaptive immune systems, NK cells express a number of cell surface receptors which either inhibit or stimulate their cytotoxicity. Able to activate NK cells citotoxicity and cytokine production such as IFNG. Receptor functions are attenuated even lost in some alleles, such as KIR2DS5*002 represented in this entry. The sequence is that of Killer cell immunoglobulin-like receptor 2DS5 from Homo sapiens (Human).